We begin with the raw amino-acid sequence, 99 residues long: Nucleoid-associated protein SPN23F10240 (99 aa).

This sequence belongs to the YbaB/EbfC family. In terms of assembly, homodimer.

The protein localises to the cytoplasm. It is found in the nucleoid. Its function is as follows. Binds to DNA and alters its conformation. May be involved in regulation of gene expression, nucleoid organization and DNA protection. This is Nucleoid-associated protein SPN23F10240 from Streptococcus pneumoniae (strain ATCC 700669 / Spain 23F-1).